Here is a 482-residue protein sequence, read N- to C-terminus: Putative transposase R186 (482 aa).

Positions 416, 419, 433, and 435 each coordinate Zn(2+).

This sequence in the central section; belongs to the transposase 2 family. The protein in the C-terminal section; belongs to the transposase 35 family.

This is Putative transposase R186 from Acanthamoeba polyphaga (Amoeba).